The chain runs to 454 residues: NADP-specific glutamate dehydrogenase 1 (454 aa).

Position 2 is an N-acetylserine (S2). K110 is an active-site residue. Residue 174 to 203 (GVLTGKGLNWGGSLIRPEATGYGLVYYTQA) coordinates NAD(+). Glycyl lysine isopeptide (Lys-Gly) (interchain with G-Cter in ubiquitin) cross-links involve residues K325, K371, and K433.

This sequence belongs to the Glu/Leu/Phe/Val dehydrogenases family. Homohexamer.

It catalyses the reaction L-glutamate + NADP(+) + H2O = 2-oxoglutarate + NH4(+) + NADPH + H(+). In terms of biological role, catalyzes the incorporation of an ammonium ion into alpha-ketoglutarate to form L-glutamate, the major route of assimilation of ammonia into an organic form in yeast. In Saccharomyces cerevisiae (strain ATCC 204508 / S288c) (Baker's yeast), this protein is NADP-specific glutamate dehydrogenase 1.